The primary structure comprises 950 residues: 5'-3' exoribonuclease 2 (950 aa).

The CCHC-type zinc finger occupies 262-278 (PCGLCNQFGHEVKDCEG). K286 carries the N6-acetyllysine modification. Residues 408–508 (KDDEDSFRRR…SDSEPEPEDN (101 aa)) form a disordered region. Residues 416–426 (RRQKEKRKRMK) show a composition bias toward basic residues. T439 bears the Phosphothreonine mark. The segment covering 445-458 (SRNSPGSQVASNPR) has biased composition (polar residues). 9 positions are modified to phosphoserine: S448, S471, S473, S475, S482, S487, S499, S501, and S678. The span at 468–482 (NNSSPSISPNTSFTS) shows a compositional bias: low complexity. 3 positions are modified to asymmetric dimethylarginine; alternate: R824, R847, and R851. Omega-N-methylarginine; alternate is present on residues R824, R847, and R851. At R880 the chain carries Asymmetric dimethylarginine. R883 is subject to Asymmetric dimethylarginine; alternate. An Omega-N-methylarginine; alternate modification is found at R883. R895 bears the Omega-N-methylarginine mark. The tract at residues 911–950 (MLAGPGGYPPRRDDRGGRQGYPREGRKYPLPPPSGRYNWN) is disordered. A compositionally biased stretch (basic and acidic residues) spans 920–937 (PRRDDRGGRQGYPREGRK). Residue R946 is modified to Asymmetric dimethylarginine; alternate. An Omega-N-methylarginine; alternate modification is found at R946.

It belongs to the 5'-3' exonuclease family. XRN2/RAT1 subfamily. In terms of assembly, interacts with POLR2A and SMN1/SMN2. Interacts with CDKN2AIP and NKRF. Interacts with CDKN2AIPNL; the interaction is direct. Interacts with TRIM71 (via NHL repeats) in an RNA-dependent manner. Interacts with DHX34; the interaction is RNA-independent. As to expression, expressed in the spleen, thymus, prostate, testis, ovary, small intestine, colon, peripheral blood leukocytes, heart, brain, placenta, lung, liver, skeletal muscle, kidney, and pancreas. Isoform 2 is expressed predominantly in peripheral blood leukocytes.

The protein resides in the nucleus. It localises to the nucleolus. Functionally, possesses 5'-&gt;3' exoribonuclease activity. May promote the termination of transcription by RNA polymerase II. During transcription termination, cleavage at the polyadenylation site liberates a 5' fragment which is subsequently processed to form the mature mRNA and a 3' fragment which remains attached to the elongating polymerase. The processive degradation of this 3' fragment by this protein may promote termination of transcription. Binds to RNA polymerase II (RNAp II) transcription termination R-loops formed by G-rich pause sites. This Homo sapiens (Human) protein is 5'-3' exoribonuclease 2 (XRN2).